Reading from the N-terminus, the 187-residue chain is Ribosome-recycling factor (187 aa).

This sequence belongs to the RRF family.

The protein resides in the cytoplasm. Its function is as follows. Responsible for the release of ribosomes from messenger RNA at the termination of protein biosynthesis. May increase the efficiency of translation by recycling ribosomes from one round of translation to another. This is Ribosome-recycling factor from Methylorubrum extorquens (strain CM4 / NCIMB 13688) (Methylobacterium extorquens).